We begin with the raw amino-acid sequence, 90 residues long: U7-theraphotoxin-Hhn1b (90 aa).

Residues 1–19 (MKTAIFTVVLALAVFAVLS) form the signal peptide. The propeptide occupies 20–50 (FGWEANEKALSEEFTELIHEKEAASETEARE). Disulfide bonds link cysteine 51–cysteine 65, cysteine 58–cysteine 70, and cysteine 64–cysteine 81.

Belongs to the neurotoxin 10 (Hwtx-1) family. 13 (Hntx-13) subfamily. Expressed by the venom gland.

Its subcellular location is the secreted. In terms of biological role, ion channel inhibitor. This is U7-theraphotoxin-Hhn1b from Cyriopagopus hainanus (Chinese bird spider).